Reading from the N-terminus, the 380-residue chain is MRSRVLWGAARWLWPRRAVGPARRPLSSGSPPLEELFTRGGPLRTFLERQAGSEAHLKVRRPELLAVIKLLNEKERELRETEHLLHDENEDLRKLAENEITLCQKEITQLKHQIILLLVPSEETDENDLILEVTAGVGGQEAMLFTSEIFDMYQQYAAFKRWHFETLEYFPSELGGLRHASASIGGSEAYRHMKFEGGVHRVQRVPKTEKQGRVHTSTMTVAILPQPTEINLVINPKDLRIDTKRASGAGGQHVNTTDSAVRIVHLPTGVVSECQQERSQLKNKELAMTKLRAKLYSMHLEEEINKRQNARKIQIGSKGRSEKIRTYNFPQNRVTDHRINKTLHDLETFMQGDYLLDELVQSLKEYADYESLVEIISQKV.

The N-terminal 26 residues, 1–26, are a transit peptide targeting the mitochondrion; it reads MRSRVLWGAARWLWPRRAVGPARRPL. Residues 63 to 117 adopt a coiled-coil conformation; sequence ELLAVIKLLNEKERELRETEHLLHDENEDLRKLAENEITLCQKEITQLKHQIILL. The interval 236-300 is GGQ domain; that stretch reads PKDLRIDTKR…LRAKLYSMHL (65 aa). The GGQ motif lies at 250 to 252; sequence GGQ. Gln252 bears the N5-methylglutamine mark.

The protein belongs to the prokaryotic/mitochondrial release factor family. Methylation of glutamine in the GGQ triplet by HEMK1 is conserved from bacteria to mammals. As to expression, expressed in skeletal muscle (at protein level).

It is found in the mitochondrion. Its function is as follows. Mitochondrial peptide chain release factor that directs the termination of translation in response to the peptide chain termination codons UAA and UAG. This Homo sapiens (Human) protein is Peptide chain release factor 1-like, mitochondrial.